A 1110-amino-acid polypeptide reads, in one-letter code: cGMP-specific 3',5'-cyclic phosphodiesterase (1110 aa).

2 stretches are compositionally biased toward low complexity: residues 1 to 25 (MTDV…SSAS) and 35 to 55 (TSTA…ASGA). 3 disordered regions span residues 1 to 55 (MTDV…ASGA), 67 to 128 (ISNQ…QQDV), and 184 to 203 (ASPT…SASS). Positions 88–103 (APYPPVPAAKPKPTPT) are enriched in pro residues. Positions 192–203 (SPRSLSNSSASS) are enriched in low complexity. GAF domains follow at residues 233-385 (DIDV…GIGI) and 417-601 (NLEC…GLGI). A PDEase domain is found at 631–954 (SQDQTEKLTQ…RNWQDLAEKV (324 aa)). His-707 functions as the Proton donor in the catalytic mechanism. A divalent metal cation contacts are provided by His-711, His-747, Asp-748, and Asp-858. Disordered stretches follow at residues 997 to 1028 (AQHG…TGAL) and 1040 to 1110 (LYNS…CSLL). Composition is skewed to basic and acidic residues over residues 1006 to 1015 (DDSHTPEHQR) and 1056 to 1068 (LESH…DDKS). The span at 1082–1097 (GRMSASSSTSSAGTVV) shows a compositional bias: low complexity. Basic residues predominate over residues 1100–1110 (SKKRSKLCSLL). The residue at position 1107 (Cys-1107) is a Cysteine methyl ester. Cys-1107 is lipidated: S-farnesyl cysteine. A propeptide spans 1108 to 1110 (SLL) (removed in mature form).

Belongs to the cyclic nucleotide phosphodiesterase family. Interacts with PrBP. The cofactor is a divalent metal cation.

The protein localises to the cell membrane. It catalyses the reaction 3',5'-cyclic GMP + H2O = GMP + H(+). Functionally, has a role regulating cGMP transport in Malpighian tubule principal cells. The polypeptide is cGMP-specific 3',5'-cyclic phosphodiesterase (Drosophila pseudoobscura pseudoobscura (Fruit fly)).